We begin with the raw amino-acid sequence, 264 residues long: Teichoic acids export ATP-binding protein TagH (264 aa).

Residues 22–243 (ERLKDVIVPF…YEKFLNDFKK (222 aa)) form the ABC transporter domain. An ATP-binding site is contributed by 57-64 (GINGSGKS).

This sequence belongs to the ABC transporter superfamily. Teichoic acids exporter (TC 3.A.1.104.1) family. In terms of assembly, the complex is composed of two ATP-binding proteins (TagH) and two transmembrane proteins (TagG).

It is found in the cell membrane. It catalyses the reaction ATP + H2O + teichoic acidSide 1 = ADP + phosphate + teichoic acidSide 2.. Part of the ABC transporter complex TagGH involved in teichoic acids export. Responsible for energy coupling to the transport system. The sequence is that of Teichoic acids export ATP-binding protein TagH from Staphylococcus saprophyticus subsp. saprophyticus (strain ATCC 15305 / DSM 20229 / NCIMB 8711 / NCTC 7292 / S-41).